The chain runs to 974 residues: MSDQKFISIRGAREHNLKNVDLDLPRDKLIVMTGLSGSGKSSLAFDTIYAEGQRRYVESLSAYARQFLEMMQKPDVDQIDGLSPAISIEQKTTSRNPRSTVGTVTEIYDYMRLLFARVGIPYSPATGLPIESQTVSQMVDRVIALEEGTRLYILAPIVRGRKGEYRKELAELQKKGFQRVKVDGTFYEIADVPPLDKKYKHDIDVVVDRVVVRPDLSTRLADSLETCLKLADGLAIAEFADKPLPVGETAEGGSANKSANETHERILFSEKFACPVSGFTIPEIEPRLFSFNNPFGACPTCDGLGTQQAIDPNLIIPDESAALKDGAVAPWARSSSPYYNQTLEALGKAYGFKVSARWSELSEEARQAILYGTKGREITFHYDDGLRSYQTTKPFEGVIPNLERRWKETDSAWSREEIERFMASTPCPACNGYRLKPEALSVKIGKKHIGEITEMSIRKADAWFRDIDGSFNEKQREIAARILKEIRERLQFLNDVGLDYLTLARNSGTLSGGESQRIRLASQIGSGLTGVLYVLDEPSIGLHQRDNARLLDTLRHLRDLGNTVIVVEHDEDAILTADYVVDIGPAAGVHGGKVIAQGSPQDIMANTNSLTGKYLSGAMEVAVPAERRKISKTKRLRVVGARGNNLKNVSADIPLGTFTAVTGVSGGGKSTFLIETLFKAASRRIMGSREHPAEYDRIEGLEFLDKVIDIDQSPIGRTPRSNPATYTGAFTPIRDWFAGLPEAKARGYQPGRFSFNVKGGRCEACQGDGVIKIEMHFLPDVYVTCDVCHGKRYNRETLDVLFKGKSIADVLDMTVEEGAEFFSAVPAVRDKLETLVKVGLGYIKVGQQATTLSGGEAQRVKLAKELSRRATGRTLYILDEPTTGLHFHDVAKLLEVLHELVEQGNTVVVIEHNLEVIKTADWVIDLGPEGGDGGGEIVAVGRPEDIVQEKRSYTGQFLKELLERRPKRSSQAAE.

An ATP-binding site is contributed by 34–41 (GLSGSGKS). ABC transporter domains are found at residues 331–610 (WARS…TNSL) and 630–959 (ISKT…QFLK). 663-670 (GVSGGGKS) contacts ATP. The segment at 762–788 (CEACQGDGVIKIEMHFLPDVYVTCDVC) adopts a C4-type zinc-finger fold.

It belongs to the ABC transporter superfamily. UvrA family. In terms of assembly, forms a heterotetramer with UvrB during the search for lesions.

The protein localises to the cytoplasm. Its function is as follows. The UvrABC repair system catalyzes the recognition and processing of DNA lesions. UvrA is an ATPase and a DNA-binding protein. A damage recognition complex composed of 2 UvrA and 2 UvrB subunits scans DNA for abnormalities. When the presence of a lesion has been verified by UvrB, the UvrA molecules dissociate. This is UvrABC system protein A from Brucella suis biovar 1 (strain 1330).